A 356-amino-acid chain; its full sequence is MSEERKVALITGITGQDGSYLTEFLISKGYYVHGIIQKIFHHFNTIVKNIYIKIDMLKEKESLTLHYGDLTDASNLHSIVSKVNPTEIYNLGAQSHVKVSFDMSEYTGDVDGLGCLRLLDAIRSCGMEKKVKYYQASTSELYGKVQEIPQSETTPFYPRSPYAVAKQYAYWIVVNYREAYDMYACNGILFNHESPRRGPTFVTRKITRFVAGIACGRDEILYLGNINAKRDWGHARDYVEAMWLMLQQEKPEDFVIATGETHSVREFVEKSFKEIDIIIKWRGEAEKEEGYCEKTGKVYVKIDEKYYRPTEVDLLLGNPNKAKKLLQWQIKTSFGELVKEMVAKDIEYIKNGDKYN.

Residues 12–17 (GITGQD), 69–70 (DL), 91–95 (LGAQS), and Tyr106 contribute to the NADP(+) site. The active site involves Thr138. Active-site nucleophile residues include Glu140 and Tyr162. Positions 166, 192, and 197 each coordinate NADP(+).

This sequence belongs to the NAD(P)-dependent epimerase/dehydratase family. GDP-mannose 4,6-dehydratase subfamily. The cofactor is NADP(+).

It carries out the reaction GDP-alpha-D-mannose = GDP-4-dehydro-alpha-D-rhamnose + H2O. Its pathway is nucleotide-sugar biosynthesis; GDP-L-fucose biosynthesis via de novo pathway; GDP-L-fucose from GDP-alpha-D-mannose: step 1/2. Its function is as follows. Participates in the synthesis of GDP-L-fucose, catalyzing the conversion of GDP-D-mannose to GDP-4-dehydro-6-deoxy-D-mannose (GDP-4-dehydro-alpha-D-rhamnose) which is further catalyzed by GDP-L-fucose synthase (ger). GDP-L-fucose is important for the synthesis of fucosylated N-glycans which are expressed on the cell surface. This is GDP-mannose 4,6 dehydratase (gmd) from Dictyostelium discoideum (Social amoeba).